A 1088-amino-acid polypeptide reads, in one-letter code: Tyrocidine synthase 1 (1088 aa).

Residues 528–602 form the Carrier domain; sequence PPRTETESIL…QVALFVKSTT (75 aa). An O-(pantetheine 4'-phosphoryl)serine modification is found at Ser563.

This sequence belongs to the ATP-dependent AMP-binding enzyme family. Large multienzyme complex of TycA, TycB and TycC. The cofactor is pantetheine 4'-phosphate.

The catalysed reaction is L-phenylalanine + ATP + H2O = D-phenylalanine + AMP + diphosphate + H(+). Its pathway is antibiotic biosynthesis; tyrocidine biosynthesis. In the first step of peptide synthesis this enzyme activates phenylalanine and racemizes it to the D-isomer. The polypeptide is Tyrocidine synthase 1 (tycA) (Brevibacillus parabrevis).